The following is a 112-amino-acid chain: MEAYEQVQKGPLKLKGVAELGVTKRKKKKKDKDKAKLLEAMGTSKKNEEEKRRGLDKRTPAQAAFEKMQEKRQMERILKKASKTHKQRVEDFNRHLDTLTEHYDIPKVSWTK.

The interval 23–58 (TKRKKKKKDKDKAKLLEAMGTSKKNEEEKRRGLDKR) is disordered. The span at 45–58 (KKNEEEKRRGLDKR) shows a compositional bias: basic and acidic residues.

The protein belongs to the FAM32 family.

The protein resides in the nucleus. Functionally, may induce G2 arrest and apoptosis. May also increase cell sensitivity to apoptotic stimuli. The sequence is that of Protein FAM32A (FAM32A) from Bos taurus (Bovine).